We begin with the raw amino-acid sequence, 524 residues long: REH2-associated factor 1 (524 aa).

Residues M1–R22 constitute a mitochondrion transit peptide. Residues A48–H70 form a C2H2-type 1; atypical zinc finger. The C2H2-type 2; atypical zinc-finger motif lies at Y121–H147. The C2H2-type 4 zinc-finger motif lies at F226–H249. Residues V286–H312 form a C2H2-type 3; atypical zinc finger. 4 C2H2-type zinc fingers span residues F334–H357, W376–H399, H406–H429, and V443–H465. Positions V463–S524 are disordered. Over residues A479–A500 the composition is skewed to low complexity.

Component of the REH2-associated complex (REH2C) composed of helicase REH2, associated factors H2F1 and H2F2, and mRNAs at various editing stages; the formation of the complex is RNA-independent. Within the complex, interacts with REH2; the interaction is direct. Interacts with various editing complexes including the RNA editing core (RECC) complex, the gRNA-binding (GRBC) complex (also known as the MRB1 complex) and the RNA editing mediator (REMC) complex.

Its subcellular location is the mitochondrion. In terms of biological role, plays an important role in mitochondrial mRNA editing by promoting the assembly of the mRNA editosome. Facilitates the recruitment of mRNA to the REH2C complex and promotes the interaction between various editing complexes including REH2C, GRBC, REMC and RECC complexes. The sequence is that of REH2-associated factor 1 from Trypanosoma brucei brucei (strain 927/4 GUTat10.1).